Consider the following 622-residue polypeptide: Chaperone protein HscA homolog (622 aa).

The protein belongs to the heat shock protein 70 family.

Its function is as follows. Chaperone involved in the maturation of iron-sulfur cluster-containing proteins. Has a low intrinsic ATPase activity which is markedly stimulated by HscB. This Burkholderia thailandensis (strain ATCC 700388 / DSM 13276 / CCUG 48851 / CIP 106301 / E264) protein is Chaperone protein HscA homolog.